The chain runs to 744 residues: Prestin (744 aa).

Over 1-75 (MDHAEENEIP…PITKWLPAYK (75 aa)) the chain is Cytoplasmic. The helical transmembrane segment at 76–105 (FKEYVLGDLVSGISTGVLQLPQGLAFAMLA) threads the bilayer. At 106–108 (AVP) the chain is on the extracellular side. The helical transmembrane segment at 109–126 (PVFGLYSSFYPVIMYCFF) threads the bilayer. Over 127–137 (GTSRHISIGPF) the chain is Cytoplasmic. The chain crosses the membrane as a helical span at residues 138 to 151 (AVISLMIGGVAVRL). The Extracellular portion of the chain corresponds to 152–168 (VPDDIVIPGGVNATNGT). The short motif at 158–168 (IPGGVNATNGT) is the Involved in motor function element. N-linked (GlcNAc...) asparagine glycans are attached at residues asparagine 163 and asparagine 166. The helical transmembrane segment at 169–196 (EARDALRVKVAMSVTLLSGIIQFCLGVC) threads the bilayer. Over 197 to 206 (RFGFVAIYLT) the chain is Cytoplasmic. Residues 207-230 (EPLVRGFTTAAAVHVFTSMLKYLF) form a helical membrane-spanning segment. Over 231 to 241 (GVKTKRYSGIF) the chain is Extracellular. The helical intramembrane region spans 242–253 (SVVYSTVAVLQN). The Extracellular portion of the chain corresponds to 254–258 (VKNLN). The helical transmembrane segment at 259 to 282 (VCSLGVGLMVFGLLLGGKEFNERF) threads the bilayer. At 283-291 (KEKLPAPIP) the chain is on the cytoplasmic side. A helical transmembrane segment spans residues 292–307 (LEFFAVVMGTGISAGF). At 308–332 (NLHESYSVDVVGTLPLGLLPPANPD) the chain is on the extracellular side. Residues 333–367 (TSLFHLVYVDAIAIAIVGFSVTISMAKTLANKHGY) traverse the membrane as a helical segment. Topologically, residues 368–370 (QVD) are cytoplasmic. Residues 371 to 388 (GNQELIALGICNSIGSLF) traverse the membrane as a helical segment. Topologically, residues 389-396 (QTFSISCS) are extracellular. A helical membrane pass occupies residues 397-406 (LSRSLVQEGT). Serine 398 serves as a coordination point for salicylate. The Cytoplasmic segment spans residues 407-410 (GGKT). The chain crosses the membrane as a helical span at residues 411–432 (QLAGCLASLMILLVILATGFLF). Over 433 to 436 (ESLP) the chain is Extracellular. A helical transmembrane segment spans residues 437 to 464 (QAVLSAIVIVNLKGMFMQFSDLPFFWRT). Serine 465 is a topological domain (cytoplasmic). Residues 466–481 (KIELTIWLTTFVSSLF) form a helical membrane-spanning segment. Residues 482–483 (LG) lie on the Extracellular side of the membrane. Residues 484 to 504 (LDYGLITAVIIALLTVIYRTQ) form a helical membrane-spanning segment. Residues 505-718 (SPSYKVLGQL…AVLGSQVREA (214 aa)) form an extended region for STAS domain region. Topologically, residues 505-744 (SPSYKVLGQL…PNATPTTPEA (240 aa)) are cytoplasmic. The STAS domain occupies 525 to 713 (AYEEVKEIPG…HSIHDAVLGS (189 aa)). The disordered stretch occupies residues 720–744 (AEQEATASLPQEDMEPNATPTTPEA).

The protein belongs to the SLC26A/SulP transporter (TC 2.A.53) family. As to quaternary structure, homodimer. Interacts (via STAS domain) with CALM; this interaction is calcium-dependent and the STAS domain interacts with only one lobe of CALM which is an elongated conformation. Interacts with MYH1. As to expression, expressed in the outer hair cells (OHC) of the organ of Corti of the inner ear. Also weak expression in brain and testis. Very weakly expressed in heart, spleen, muscle and lactating mammary glands. Expressed in cardiac myocytes (at protein level), both in the surface sarcolemma and along the t-tubule. Weakly expressed in skeletal muscle cells (at protein level).

It is found in the lateral cell membrane. It carries out the reaction 2 hydrogencarbonate(in) + chloride(out) = 2 hydrogencarbonate(out) + chloride(in). Its function is as follows. Voltage-sensitive motor protein that drives outer hair cell (OHC) electromotility (eM) and participates in sound amplification in the hearing organ. Converts changes in the transmembrane electric potential into mechanical displacements resulting in the coupling of its expansion to movement of a charged voltage sensor across the lipid membrane. The nature of the voltage sensor is not completely clear, and two models compete. In the first model, acts as an incomplete transporter where intracellular chloride anion acts as extrinsic voltage sensor that drives conformational change in the protein which is sufficient to produce a length change in the plane of the membrane and hence in the length of the OHC. The second model in which multiple charged amino acid residues are distributed at the intracellular and extracellular membrane interfaces that form an intrinsic voltage sensor, whose movement produces the non-linear capacitance (NLC). However, the effective voltage sensor may be the result of a hybrid voltage sensor, assembled from intrinsic charge (charged residues) and extrinsic charge (bound anion). Notably, binding of anions to the anion-binding pocket partially neutralizes the intrinsic positive charge rather than to form an electrically negative sensor, therefore remaining charge may serve as voltage sensor that, after depolarization, moves from down (expanded state) to up (contracted) conformation, which is accompanied by an eccentric contraction of the intermembrane cross-sectional area of the protein as well as a major increase in the hydrophobic thickness of the protein having as consequences the plasma membrane thickening and the cell contraction after membrane depolarization. The anion-binding pocket transits from the inward-open (Down) state, where it is exposed toward the intracellular solvent in the absence of anion, to the occluded (Up) state upon anion binding. Salicylate competes for the anion-binding site and inhibits the voltage-sensor movement, and therefore inhibits the charge transfer and electromotility by displacing Cl(-) from the anion-binding site and by preventing the structural transitions to the contracted state. In addition, can act as a weak Cl(-)/HCO3(-) antiporter across the cell membrane and so regulate the intracellular pH of the outer hair cells (OHCs), while firstly found as being unable to mediate electrogenic anion transport. Moreover, supports a role in cardiac mechanical amplification serving as an elastic element to enhance the actomyosin- based sarcomere contraction system. This is Prestin from Mus musculus (Mouse).